The following is a 193-amino-acid chain: Protein GrpE (193 aa).

The segment covering 1–22 has biased composition (basic and acidic residues); the sequence is MDPKEKEKMAEELNVEETKDTA. The disordered stretch occupies residues 1–45; that stretch reads MDPKEKEKMAEELNVEETKDTAEEQPQDDQAEEAAPLTHEEQLEK. Residues 23–32 are compositionally biased toward acidic residues; sequence EEQPQDDQAE.

This sequence belongs to the GrpE family. Homodimer.

Its subcellular location is the cytoplasm. Its function is as follows. Participates actively in the response to hyperosmotic and heat shock by preventing the aggregation of stress-denatured proteins, in association with DnaK and GrpE. It is the nucleotide exchange factor for DnaK and may function as a thermosensor. Unfolded proteins bind initially to DnaJ; upon interaction with the DnaJ-bound protein, DnaK hydrolyzes its bound ATP, resulting in the formation of a stable complex. GrpE releases ADP from DnaK; ATP binding to DnaK triggers the release of the substrate protein, thus completing the reaction cycle. Several rounds of ATP-dependent interactions between DnaJ, DnaK and GrpE are required for fully efficient folding. The chain is Protein GrpE from Bacteroides thetaiotaomicron (strain ATCC 29148 / DSM 2079 / JCM 5827 / CCUG 10774 / NCTC 10582 / VPI-5482 / E50).